The primary structure comprises 263 residues: Small ribosomal subunit protein eS4, Y isoform 2 (263 aa).

Positions 42–104 (LPLIVFLRNR…TGEHFRLVYD (63 aa)) constitute an S4 RNA-binding domain.

Belongs to the eukaryotic ribosomal protein eS4 family.

The polypeptide is Small ribosomal subunit protein eS4, Y isoform 2 (RPS4Y2) (Pan troglodytes (Chimpanzee)).